Consider the following 227-residue polypeptide: Cytidylate kinase (227 aa).

An ATP-binding site is contributed by 12–20 (GPSGAGKGT).

This sequence belongs to the cytidylate kinase family. Type 1 subfamily.

Its subcellular location is the cytoplasm. The enzyme catalyses CMP + ATP = CDP + ADP. It catalyses the reaction dCMP + ATP = dCDP + ADP. The polypeptide is Cytidylate kinase (Xanthomonas axonopodis pv. citri (strain 306)).